Here is a 72-residue protein sequence, read N- to C-terminus: SRY-related protein MG43 (72 aa).

A DNA-binding region (HMG box) is located at residues 1–69 (VKRPMNAFMV…KHMADYPDYK (69 aa)).

The protein localises to the nucleus. The protein is SRY-related protein MG43 of Tarentola mauritanica (Common wall gecko).